Here is a 167-residue protein sequence, read N- to C-terminus: 2-C-methyl-D-erythritol 2,4-cyclodiphosphate synthase (167 aa).

Positions 15 and 17 each coordinate a divalent metal cation. Residues 15 to 17 and 43 to 44 contribute to the 4-CDP-2-C-methyl-D-erythritol 2-phosphate site; these read DIH and HS. Position 51 (histidine 51) interacts with a divalent metal cation. 4-CDP-2-C-methyl-D-erythritol 2-phosphate-binding positions include 65-67, 141-144, and arginine 151; these read DIG and TTNE.

It belongs to the IspF family. Homotrimer. Requires a divalent metal cation as cofactor.

The catalysed reaction is 4-CDP-2-C-methyl-D-erythritol 2-phosphate = 2-C-methyl-D-erythritol 2,4-cyclic diphosphate + CMP. Its pathway is isoprenoid biosynthesis; isopentenyl diphosphate biosynthesis via DXP pathway; isopentenyl diphosphate from 1-deoxy-D-xylulose 5-phosphate: step 4/6. Its function is as follows. Involved in the biosynthesis of isopentenyl diphosphate (IPP) and dimethylallyl diphosphate (DMAPP), two major building blocks of isoprenoid compounds. Catalyzes the conversion of 4-diphosphocytidyl-2-C-methyl-D-erythritol 2-phosphate (CDP-ME2P) to 2-C-methyl-D-erythritol 2,4-cyclodiphosphate (ME-CPP) with a corresponding release of cytidine 5-monophosphate (CMP). In Prochlorococcus marinus (strain MIT 9312), this protein is 2-C-methyl-D-erythritol 2,4-cyclodiphosphate synthase.